A 305-amino-acid chain; its full sequence is Dermonecrotic toxin LiSicTox-alphaIA2aiii (305 aa).

Residues 1–17 form the signal peptide; sequence LPYIALILVCWSVLSQA. Residues 18–25 constitute a propeptide that is removed on maturation; the sequence is AQTDVEER. Residue histidine 37 is part of the active site. Glutamate 57 and aspartate 59 together coordinate Mg(2+). Catalysis depends on histidine 73, which acts as the Nucleophile. Intrachain disulfides connect cysteine 77/cysteine 83 and cysteine 79/cysteine 222. A Mg(2+)-binding site is contributed by aspartate 117. Residue asparagine 282 is glycosylated (N-linked (GlcNAc...) asparagine).

It belongs to the arthropod phospholipase D family. Class II subfamily. The cofactor is Mg(2+). Expressed by the venom gland.

It localises to the secreted. The enzyme catalyses an N-(acyl)-sphingosylphosphocholine = an N-(acyl)-sphingosyl-1,3-cyclic phosphate + choline. The catalysed reaction is an N-(acyl)-sphingosylphosphoethanolamine = an N-(acyl)-sphingosyl-1,3-cyclic phosphate + ethanolamine. It carries out the reaction a 1-acyl-sn-glycero-3-phosphocholine = a 1-acyl-sn-glycero-2,3-cyclic phosphate + choline. It catalyses the reaction a 1-acyl-sn-glycero-3-phosphoethanolamine = a 1-acyl-sn-glycero-2,3-cyclic phosphate + ethanolamine. Functionally, dermonecrotic toxins cleave the phosphodiester linkage between the phosphate and headgroup of certain phospholipids (sphingolipid and lysolipid substrates), forming an alcohol (often choline) and a cyclic phosphate. This toxin acts on sphingomyelin (SM). It may also act on ceramide phosphoethanolamine (CPE), lysophosphatidylcholine (LPC) and lysophosphatidylethanolamine (LPE), but not on lysophosphatidylserine (LPS), and lysophosphatidylglycerol (LPG). It acts by transphosphatidylation, releasing exclusively cyclic phosphate products as second products. Induces dermonecrosis, hemolysis, increased vascular permeability, edema, inflammatory response, and platelet aggregation. This is Dermonecrotic toxin LiSicTox-alphaIA2aiii from Loxosceles intermedia (Brown spider).